Reading from the N-terminus, the 634-residue chain is Threonine--tRNA ligase (634 aa).

Positions 1–61 (MINIRFPDGS…NSNCELRLIT (61 aa)) constitute a TGS domain. Residues 241–532 (DHRKIGKVLD…LIEHYAGNLP (292 aa)) form a catalytic region. Positions 332, 383, and 509 each coordinate Zn(2+).

The protein belongs to the class-II aminoacyl-tRNA synthetase family. As to quaternary structure, homodimer. It depends on Zn(2+) as a cofactor.

The protein resides in the cytoplasm. The catalysed reaction is tRNA(Thr) + L-threonine + ATP = L-threonyl-tRNA(Thr) + AMP + diphosphate + H(+). Its function is as follows. Catalyzes the attachment of threonine to tRNA(Thr) in a two-step reaction: L-threonine is first activated by ATP to form Thr-AMP and then transferred to the acceptor end of tRNA(Thr). Also edits incorrectly charged L-seryl-tRNA(Thr). The polypeptide is Threonine--tRNA ligase (Francisella tularensis subsp. novicida (strain U112)).